Consider the following 232-residue polypeptide: Large ribosomal subunit protein uL1 (232 aa).

It belongs to the universal ribosomal protein uL1 family. As to quaternary structure, part of the 50S ribosomal subunit.

In terms of biological role, binds directly to 23S rRNA. The L1 stalk is quite mobile in the ribosome, and is involved in E site tRNA release. Protein L1 is also a translational repressor protein, it controls the translation of the L11 operon by binding to its mRNA. The chain is Large ribosomal subunit protein uL1 from Burkholderia cenocepacia (strain HI2424).